Consider the following 370-residue polypeptide: Protein Brevis radix-like 3 (370 aa).

The BRX 1 domain maps to 140–221; the sequence is KEWVAQVEPG…NFEKVMELYN (82 aa). Composition is skewed to polar residues over residues 231–248 and 266–291; these read LQTP…QSVK and PGSS…SSID. The segment at 231-316 is disordered; that stretch reads LQTPPVSEDG…VSNASDMESE (86 aa). One can recognise a BRX 2 domain in the interval 315–370; the sequence is SEWVEQDEPGIYITIRALPDGNRELRRVRFSRDKFGETHARLWWEQNRARIQQQYL.

Belongs to the BRX family. Expressed in roots.

The protein localises to the nucleus. The polypeptide is Protein Brevis radix-like 3 (BRXL3) (Arabidopsis thaliana (Mouse-ear cress)).